Reading from the N-terminus, the 72-residue chain is Conotoxin VnMKLT2-021 (72 aa).

The N-terminal stretch at 1–22 (MKLTCVLIVAVLFLTACQLTTA) is a signal peptide. Residues 23–45 (ASYARSERQHPDLGSSDQNSKLT) constitute a propeptide that is removed on maturation. 3 disulfide bridges follow: Cys-48–Cys-62, Cys-55–Cys-66, and Cys-61–Cys-71.

This sequence belongs to the conotoxin O1 superfamily. As to expression, expressed by the venom duct.

It localises to the secreted. The protein is Conotoxin VnMKLT2-021 of Conus ventricosus (Mediterranean cone).